The sequence spans 106 residues: MSKNFEWISPDFDLLEKEKTAVKPPSMYHVVLNNDDYTPMDFVIEILERFFSMDIERATQVMLKVHYEGKAICGTFTAEVAETKVAQVTMYSRENEHPLLCTMEQA.

It belongs to the ClpS family. As to quaternary structure, binds to the N-terminal domain of the chaperone ClpA.

Its function is as follows. Involved in the modulation of the specificity of the ClpAP-mediated ATP-dependent protein degradation. This Vibrio cholerae serotype O1 (strain ATCC 39541 / Classical Ogawa 395 / O395) protein is ATP-dependent Clp protease adapter protein ClpS.